The following is a 394-amino-acid chain: Elongation factor Tu (394 aa).

The tr-type G domain maps to Lys10–Glu204. Residues Gly19 to Thr26 are G1. A GTP-binding site is contributed by Gly19–Thr26. Thr26 is a binding site for Mg(2+). The interval Gly60–Asn64 is G2. The G3 stretch occupies residues Asp81–Gly84. GTP is bound by residues Asp81–His85 and Asn136–Asp139. Positions Asn136–Asp139 are G4. The G5 stretch occupies residues Ser174–Leu176.

The protein belongs to the TRAFAC class translation factor GTPase superfamily. Classic translation factor GTPase family. EF-Tu/EF-1A subfamily. In terms of assembly, monomer.

The protein resides in the cytoplasm. It catalyses the reaction GTP + H2O = GDP + phosphate + H(+). Functionally, GTP hydrolase that promotes the GTP-dependent binding of aminoacyl-tRNA to the A-site of ribosomes during protein biosynthesis. This is Elongation factor Tu from Shewanella sp. (strain ANA-3).